A 185-amino-acid chain; its full sequence is Ribosome-recycling factor (185 aa).

Belongs to the RRF family.

The protein localises to the cytoplasm. Functionally, responsible for the release of ribosomes from messenger RNA at the termination of protein biosynthesis. May increase the efficiency of translation by recycling ribosomes from one round of translation to another. The sequence is that of Ribosome-recycling factor from Roseiflexus sp. (strain RS-1).